Consider the following 116-residue polypeptide: Protein Wnt-5(I) (116 aa).

Ser-1 carries O-palmitoleoyl serine; by PORCN lipidation. Asn-69 carries an N-linked (GlcNAc...) asparagine glycan. Residues Cys-82 and Cys-97 are joined by a disulfide bond.

It belongs to the Wnt family. Palmitoleoylation is required for efficient binding to frizzled receptors. Depalmitoleoylation leads to Wnt signaling pathway inhibition.

The protein localises to the secreted. It localises to the extracellular space. Its subcellular location is the extracellular matrix. Its function is as follows. Ligand for members of the frizzled family of seven transmembrane receptors. Probable developmental protein. May be a signaling molecule which affects the development of discrete regions of tissues. Is likely to signal over only few cell diameters. This is Protein Wnt-5(I) (WNT-5(I)) from Eptatretus stoutii (Pacific hagfish).